Consider the following 259-residue polypeptide: MFNLLNTYITSPLDQFEIRTLFGLQSSFIDLSCLNLTTFSLYTIIVLLVITSLYTLTNNNNKIIGSRWLISQEAIYDTIMNMTKGQIGGKNWGLYFPMIFTLFMFIFIANLISMIPYSFALSAHLVFIISLSIVIWLGNTILGLYKHGWVFFSLFVPAGTPLPLVPLLVIIETLSYFARAISLGLRLGSNILAGHLLMVILAGLTFNFMLINLFTLVFGFVPLAMILAIMMLEFAIGIIQGYVWAILTASYLKDAVYLH.

The propeptide at 1 to 10 (MFNLLNTYIT) is removed in mature form. The next 6 helical transmembrane spans lie at 36 to 56 (LTTFSLYTIIVLLVITSLYTL), 92 to 112 (WGLYFPMIFTLFMFIFIANLI), 125 to 145 (LVFIISLSIVIWLGNTILGLY), 150 to 170 (VFFSLFVPAGTPLPLVPLLVI), 191 to 211 (ILAGHLLMVILAGLTFNFMLI), and 216 to 236 (LVFGFVPLAMILAIMMLEFAI).

Belongs to the ATPase A chain family. F-type ATPases have 2 components, CF(1) - the catalytic core - and CF(0) - the membrane proton channel. In yeast, the dimeric form of ATP synthase consists of 17 polypeptides: alpha, beta, gamma, delta, epsilon, 4 (B), 5 (OSCP), 6 (A), 8, 9 (C), d, E (Tim11), f, g, h, i/j and k.

The protein resides in the mitochondrion inner membrane. Its function is as follows. Mitochondrial membrane ATP synthase (F(1)F(0) ATP synthase or Complex V) produces ATP from ADP in the presence of a proton gradient across the membrane which is generated by electron transport complexes of the respiratory chain. F-type ATPases consist of two structural domains, F(1) - containing the extramembraneous catalytic core and F(0) - containing the membrane proton channel, linked together by a central stalk and a peripheral stalk. During catalysis, ATP synthesis in the catalytic domain of F(1) is coupled via a rotary mechanism of the central stalk subunits to proton translocation. Key component of the proton channel; it may play a direct role in the translocation of protons across the membrane. The chain is ATP synthase subunit a (ATP6) from Saccharomyces cerevisiae (strain ATCC 204508 / S288c) (Baker's yeast).